Here is a 297-residue protein sequence, read N- to C-terminus: Bifunctional protein FolD (297 aa).

NADP(+) is bound by residues 168 to 170 (GRG), Thr-195, and Val-236.

The protein belongs to the tetrahydrofolate dehydrogenase/cyclohydrolase family. As to quaternary structure, homodimer.

The catalysed reaction is (6R)-5,10-methylene-5,6,7,8-tetrahydrofolate + NADP(+) = (6R)-5,10-methenyltetrahydrofolate + NADPH. The enzyme catalyses (6R)-5,10-methenyltetrahydrofolate + H2O = (6R)-10-formyltetrahydrofolate + H(+). Its pathway is one-carbon metabolism; tetrahydrofolate interconversion. Its function is as follows. Catalyzes the oxidation of 5,10-methylenetetrahydrofolate to 5,10-methenyltetrahydrofolate and then the hydrolysis of 5,10-methenyltetrahydrofolate to 10-formyltetrahydrofolate. The chain is Bifunctional protein FolD from Bifidobacterium animalis subsp. lactis (strain AD011).